The sequence spans 687 residues: Tripartite terminase subunit 3 (687 aa).

Residues 67–91 are disordered; that stretch reads HHPATPTSANPDVGTPRPSEDNVPA. The Walker A motif signature appears at 221-228; the sequence is IPRRHGKT. Residues 316-321 carry the Walker B motif motif; sequence LLYVDE. Glu-321 functions as the For ATPase activity in the catalytic mechanism. Residues Asp-476, Glu-550, and Asp-662 each act as for nuclease activity in the active site.

It belongs to the herpesviridae TRM3 protein family. As to quaternary structure, interacts with the terminase subunits TRM1 and TRM2. Interacts with portal protein.

The protein localises to the host nucleus. Functionally, component of the molecular motor that translocates viral genomic DNA in empty capsid during DNA packaging. Forms a tripartite terminase complex together with TRM1 and TRM2 in the host cytoplasm. Once the complex reaches the host nucleus, it interacts with the capsid portal vertex. This portal forms a ring in which genomic DNA is translocated into the capsid. TRM3 carries an RNase H-like nuclease activity that plays an important role for the cleavage of concatemeric viral DNA into unit length genomes. The protein is Tripartite terminase subunit 3 of Human herpesvirus 8 type P (isolate GK18) (HHV-8).